Here is a 215-residue protein sequence, read N- to C-terminus: Protein LURP-one-related 16 (215 aa).

Residue G2 is the site of N-myristoyl glycine attachment.

It belongs to the LOR family.

Functionally, might be related to the phospholipid scramblase and tubby-like superfamily of membrane tethered transcription factors. This Arabidopsis thaliana (Mouse-ear cress) protein is Protein LURP-one-related 16.